Reading from the N-terminus, the 213-residue chain is Ribosomal RNA small subunit methyltransferase G (213 aa).

S-adenosyl-L-methionine-binding positions include Gly-75, Phe-80, 128–129 (IE), and Arg-144.

This sequence belongs to the methyltransferase superfamily. RNA methyltransferase RsmG family.

It localises to the cytoplasm. The catalysed reaction is guanosine(527) in 16S rRNA + S-adenosyl-L-methionine = N(7)-methylguanosine(527) in 16S rRNA + S-adenosyl-L-homocysteine. In terms of biological role, specifically methylates the N7 position of guanine in position 527 of 16S rRNA. This chain is Ribosomal RNA small subunit methyltransferase G, found in Brucella ovis (strain ATCC 25840 / 63/290 / NCTC 10512).